Consider the following 443-residue polypeptide: C4-dicarboxylate transport protein (443 aa).

A run of 9 helical transmembrane segments spans residues 17-37, 57-77, 92-112, 139-159, 161-181, 201-221, 234-254, 320-340, and 368-388; these read PFYSHLYVQVLAAIAAGILLG, LVKMVIAPVIFLTVATGIAGM, LYFLTFSTLALVIGMIVANVV, EQSIVGFLTNIIPTTIVGAFA, GDILQVLFFSVLFGIALAMVG, LVGILMKAAPIGAFGAMAFTI, MLIGTFYITSLLFVLVVLGAV, IYMTLAALFIAQATGIQLSWG, and AATLSVVPSVPVAGMALILGI.

Belongs to the dicarboxylate/amino acid:cation symporter (DAACS) (TC 2.A.23) family.

The protein localises to the cell inner membrane. Functionally, responsible for the transport of dicarboxylates such as succinate, fumarate, and malate from the periplasm across the membrane. This Rhizobium etli (strain ATCC 51251 / DSM 11541 / JCM 21823 / NBRC 15573 / CFN 42) protein is C4-dicarboxylate transport protein.